An 829-amino-acid chain; its full sequence is RNA-directed RNA polymerase (829 aa).

A disordered region spans residues 1 to 39 (MKEPVDCRLSTPAGFSGTVPPPGRTKAARPGTIPVRRSR).

In terms of assembly, forms a ribonucleoprotein complex with the 20S RNA, where a single polymerase molecule binds to a single viral RNA genome. Since the viral RNA is not encapsidated, ribonucleoprotein complex formation appears to be the strategy to survive in the host as persistent virus.

The protein localises to the host cytoplasm. The catalysed reaction is RNA(n) + a ribonucleoside 5'-triphosphate = RNA(n+1) + diphosphate. In terms of biological role, RNA-directed RNA polymerase that replicates the viral (+) and (-) genome. This Saccharomyces cerevisiae (Baker's yeast) protein is RNA-directed RNA polymerase.